The following is a 461-amino-acid chain: Tumor necrosis factor receptor superfamily member 1A (461 aa).

Positions 1-29 (MGLSTVPGLLLPLVLRALLVDVYPAGVHG) are cleaved as a signal peptide. Residues 30–210 (LVLHPGDREK…RNDFQDTGTT (181 aa)) lie on the Extracellular side of the membrane. 4 TNFR-Cys repeats span residues 43-82 (LCPQGKYSHPQNRSICCTKCHKGTYLHNDCLGPGLDTDCR), 83-125 (ECDN…DTVC), 126-166 (GCRK…DTIC), and 167-195 (NCHSGFFLRDKECVSCVNCKNADCKNLCP). Disulfide bonds link C44–C58, C59–C72, C62–C81, C84–C99, C102–C117, C105–C125, and C127–C143. N54 carries an N-linked (GlcNAc...) asparagine glycan. Residue N86 is glycosylated (N-linked (GlcNAc...) asparagine). 2 N-linked (GlcNAc...) asparagine glycosylation sites follow: N145 and N151. 5 cysteine pairs are disulfide-bonded: C146–C158, C149–C166, C168–C179, C182–C194, and C185–C190. A helical membrane pass occupies residues 211 to 233 (VLLPLVIFFGLCLAFFLFVGLAC). The Cytoplasmic segment spans residues 234–461 (RYQRWKPKLY…RLAPAPHLLR (228 aa)). The interval 340-350 (LPKWGGSAHSA) is N-SMase activation domain (NSD). Positions 362–447 (PATLYAVVDG…GCLEDIEEAL (86 aa)) constitute a Death domain.

In terms of assembly, binding of TNF to the extracellular domain leads to homotrimerization. The aggregated death domains provide a novel molecular interface that interacts specifically with the death domain of TRADD. Various TRADD-interacting proteins such as TRAFS, RIPK1 and possibly FADD, are recruited to the complex by their association with TRADD. This complex activates at least two distinct signaling cascades, apoptosis and NF-kappa-B signaling. Interacts with BAG4, BABAM2, FEM1B, GRB2, SQSTM1 and TRPC4AP. Interacts with DAB2IP. Interacts directly with NOL3 (via CARD domain); inhibits TNF-signaling pathway. Interacts with SH3RF2, TRADD and RIPK1. SH3RF2 facilitates the recruitment of RIPK1 and TRADD to TNFRSF1A in a TNF-alpha-dependent process. Interacts with PGLYRP1; this interaction is important for cell death induction. Interacts (via death domain) with MADD (via death domain).

It is found in the cell membrane. It localises to the golgi apparatus membrane. Receptor for TNFSF2/TNF-alpha and homotrimeric TNFSF1/lymphotoxin-alpha. The adapter molecule FADD recruits caspase-8 to the activated receptor. The resulting death-inducing signaling complex (DISC) performs caspase-8 proteolytic activation which initiates the subsequent cascade of caspases (aspartate-specific cysteine proteases) mediating apoptosis. In Sus scrofa (Pig), this protein is Tumor necrosis factor receptor superfamily member 1A (TNFRSF1A).